We begin with the raw amino-acid sequence, 580 residues long: Putative ankyrin repeat protein L63 (580 aa).

14 ANK repeats span residues 81–110, 111–140, 141–170, 172–200, 202–230, 314–339, 340–369, 370–399, 400–429, 431–459, 461–489, 490–519, 521–549, and 551–579; these read SLNR…DFRI, DNDY…NIGA, NDNC…DINA, NNYP…DIRA, DDYV…VLNK, SLDD…LLGA, SERK…NIKC, GSNC…DINS, GNNY…NIRA, NDRA…NIRA, DDRA…DIKA, GDDY…NIKA, DDYA…DIRA, and NNYA…VINP.

This Acanthamoeba polyphaga (Amoeba) protein is Putative ankyrin repeat protein L63.